Reading from the N-terminus, the 429-residue chain is C4-dicarboxylate transport protein (429 aa).

Helical transmembrane passes span 9–29 (VLYVQVIFAIIVGVILGHYYP), 45–65 (LIKMVIGPIIFCTVVTGIAGM), 79–99 (LLYFEIVSTFALLLGLAATHI), 149–169 (GEILQILLIALLFGSVLAHLG), 185–205 (VLFGIVHIVTKLAPIGAFGAM), 223–243 (LIGTFYLTSVVFVLVVLGTIA), 308–328 (IYMTMAVLFIAQATNIELTWM), and 356–376 (AATLAVVPTIPLSGMVLILGI).

Belongs to the dicarboxylate/amino acid:cation symporter (DAACS) (TC 2.A.23) family.

The protein localises to the cell inner membrane. Functionally, responsible for the transport of dicarboxylates such as succinate, fumarate, and malate from the periplasm across the membrane. The chain is C4-dicarboxylate transport protein from Burkholderia lata (strain ATCC 17760 / DSM 23089 / LMG 22485 / NCIMB 9086 / R18194 / 383).